The primary structure comprises 413 residues: ATP phosphoribosyltransferase 2, chloroplastic (413 aa).

Residues 1 to 57 constitute a chloroplast transit peptide; sequence MPISIPLNATLQYSSPSSSSSSSSLVPSSPLFSPIPSTTVSLTGIRQRCLRMVTSCV.

The protein belongs to the ATP phosphoribosyltransferase family. Long subfamily. The cofactor is Mg(2+).

It localises to the plastid. It is found in the chloroplast. The enzyme catalyses 1-(5-phospho-beta-D-ribosyl)-ATP + diphosphate = 5-phospho-alpha-D-ribose 1-diphosphate + ATP. The protein operates within amino-acid biosynthesis; L-histidine biosynthesis; L-histidine from 5-phospho-alpha-D-ribose 1-diphosphate: step 1/9. Its activity is regulated as follows. Feedback inhibited by L-histidine. Catalyzes the condensation of ATP and 5-phosphoribose 1-diphosphate to form N'-(5'-phosphoribosyl)-ATP (PR-ATP). In Arabidopsis thaliana (Mouse-ear cress), this protein is ATP phosphoribosyltransferase 2, chloroplastic (HISN1B).